The following is a 280-amino-acid chain: Protein scylla (280 aa).

Residues 39 to 96 (LMSKKAKTTTGGSSNGSNATATSTTTSTSSSIKHKQPAGSSNNNVGQSQSKKTKPSGS) are disordered. 2 stretches are compositionally biased toward low complexity: residues 46–69 (TTTG…TSSS) and 77–96 (GSSN…PSGS).

The protein belongs to the DDIT4 family.

The protein resides in the cytoplasm. In terms of biological role, inhibits cell growth by regulating the Tor pathway upstream of the Tsc1-Tsc2 complex and downstream of Akt1. Acts as a cell death activator during head development. This Drosophila melanogaster (Fruit fly) protein is Protein scylla (scyl).